The following is a 130-amino-acid chain: Large ribosomal subunit protein eL22 (130 aa).

The interval 1–21 is disordered; sequence MPGKTAQKGGRPSGKGKKKKQ. The Nuclear localization signal motif lies at 17–20; it reads KKKK.

The protein belongs to the eukaryotic ribosomal protein eL22 family.

The chain is Large ribosomal subunit protein eL22 (RPL22) from Tripneustes gratilla (Hawaian sea urchin).